Consider the following 336-residue polypeptide: NEDD4 family-interacting protein 2 (336 aa).

Disordered stretches follow at residues 1–24 and 37–156; these read MARR…RGAP and SAAA…SITV. Topologically, residues 1–231 are cytoplasmic; that stretch reads MARRRSQRVC…ADQLRVGNDG (231 aa). Residues 37–48 show a composition bias toward low complexity; sequence SAAAAGATGSEE. Over residues 78-99 the composition is skewed to basic and acidic residues; it reads EHGEDSLSRKPDPEPGRMDHHQ. Residues 148-151 are interaction with NEDD4; that stretch reads PPPY. Positions 148–151 match the PPxY motif 1 motif; that stretch reads PPPY. Phosphotyrosine; by SRC occurs at positions 151, 167, 171, and 177. 2 short sequence motifs (PPxY motif) span residues 174–177 and 184–186; these read PPPY and PTY. Residues 232–252 form a helical membrane-spanning segment; sequence IFMLAFFMAFIFNWLGFCLSF. At 253–257 the chain is on the extracellular side; sequence CITNT. The chain crosses the membrane as a helical span at residues 258–278; it reads IAGRYGAICGFGLSLIKWILI. Topologically, residues 279-287 are cytoplasmic; sequence VRFSDYFTG. The helical transmembrane segment at 288–308 threads the bilayer; the sequence is YFNGQYWLWWIFLVLGLLLFF. The Extracellular portion of the chain corresponds to 309–336; the sequence is RGFVNYLKVRNMSESMAAAHRTRYFFLL.

In terms of assembly, forms heterodimers with NDFIP1. Interacts with HECT domain-containing E3 ubiquitin-protein ligases, including NEDD4. Interacts with NEDD4L. Interacts with PTEN. When phosphorylated at Tyr-167, interacts with SRC and LYN SH2 domain. May thus act as a scaffold that recruits SRC to NDFIP1, enhancing NDFIP1 phosphorylation. Interacts with SLC11A2/DMT1. May interact with phosphorylated EGFR. Interacts with KCNH2. Ubiquitinated by NEDD4 and ITCH. Also ubiquitinated by NEDD4L. Ubiquitination by NEDD4 or NEDD4L does not affect turnover. In terms of processing, undergoes transient tyrosine-phosphorylation following EGF stimulation, most probably catalyzed by SRC. Phosphorylation on Tyr-151, Tyr-171 and Tyr-177 are dependent on the phosphorylation on Tyr-167. Also phosphorylated by LYN and FYN. In terms of tissue distribution, expressed in brain, lung, heart, skeletal muscle, kidney, liver and placenta.

It localises to the endosome membrane. The protein resides in the golgi apparatus membrane. It is found in the endosome. Its subcellular location is the multivesicular body membrane. Activates HECT domain-containing E3 ubiquitin-protein ligases, including ITCH, NEDD4, NEDD4L, SMURF2, WWP1 and WWP2, and consequently modulates the stability of their targets. As a result, may control many cellular processes. Recruits ITCH, NEDD4 and SMURF2 to endosomal membranes. Negatively regulates KCNH2 potassium channel activity by decreasing its cell-surface expression and interfering with channel maturation through recruitment of NEDD4L to the Golgi apparatus and multivesicular body where it mediates KCNH2 degradation. May modulate EGFR signaling. Together with NDFIP1, limits the cytokine signaling and expansion of effector Th2 T-cells by promoting degradation of JAK1, probably by ITCH- and NEDD4L-mediated ubiquitination. The sequence is that of NEDD4 family-interacting protein 2 (NDFIP2) from Homo sapiens (Human).